The sequence spans 662 residues: Forkhead box protein O1 (662 aa).

2 disordered regions span residues 1–62 (MAEA…PSAS) and 122–165 (GCLH…SRRN). Position 24 is a phosphothreonine; by PKB/AKT1 or PKB/AKT2 and SGK1 (Thr-24). The segment covering 33–62 (SQSNSATSSPAPSGGAAANPDAAAGLPSAS) has biased composition (low complexity). Residues 126-146 (PAPPQQPPPPGPLSQHPPVPP) are compositionally biased toward pro residues. A DNA-binding region (fork-head) is located at residues 167 to 261 (WGNLSYADLI…KSGKSPRRRA (95 aa)). DNA-binding stretches follow at residues 218-225 (NSIRHNLS) and 241-244 (SSWW). Ser-219 is modified (phosphoserine; by STK4/MST1). Phosphoserine occurs at positions 225, 241, and 242. The disordered stretch occupies residues 241–342 (SSWWMLNPEG…GRLSPIMTEQ (102 aa)). Residues Lys-252 and Lys-255 each carry the N6-acetyllysine modification. A Phosphoserine; by CDK1 modification is found at Ser-256. Residues Arg-258 and Arg-260 each carry the omega-N-methylarginine; by PRMT1 modification. Positions 258–260 (RRR) match the Nuclear localization signal motif. Ser-263 carries the phosphoserine; by PKB/AKT1 and SGK1 modification. Lys-269, Lys-272, and Lys-281 each carry N6-acetyllysine. Basic residues predominate over residues 271–282 (AKSRGRAAKKKA). Residues 290 to 570 (GAGDSPGSQF…RLTQEKTALQ (281 aa)) form a sufficient for interaction with NLK region. Residues Ser-294 and Ser-305 each carry the phosphoserine modification. Over residues 316–333 (NWSTFRPRTSSNASTISG) the composition is skewed to polar residues. Ser-326 is subject to Phosphoserine; by PKB/AKT1. Residue Ser-329 is modified to Phosphoserine; by CK1 and SGK1. A Phosphoserine; by CK1 modification is found at Ser-332. Residue Ser-336 is modified to Phosphoserine; by DYRK1A. Position 340 is a phosphothreonine (Thr-340). A required for interaction with RUNX2 region spans residues 370-466 (SEISNPENME…GGMAQYNCAA (97 aa)). The residue at position 430 (Lys-430) is an N6-acetyllysine. The Required for interaction with SIRT1 signature appears at 469-473 (LKELL).

As to quaternary structure, interacts with LRPPRC. Interacts with RUNX2; the interaction inhibits RUNX2 transcriptional activity and mediates the IGF1/insulin-dependent BGLAP expression in osteoblasts Interacts with PPP2R1A; the interaction regulates the dephosphorylation of FOXO1 at Thr-24 and Ser-263 leading to its nuclear import. Interacts with NLK. Interacts with SIRT1; the interaction results in the deacetylation of FOXO1 leading to activation of FOXO1-mediated transcription of genes involved in DNA repair and stress resistance. Binds to CDK1. Interacts with the 14-3-3 proteins, YWHAG and YWHAZ; the interactions require insulin-stimulated phosphorylation on Thr-24, promote nuclear exit and loss of transcriptional activity. Interacts with SKP2; the interaction ubiquitinates FOXO1 leading to its proteasomal degradation. The interaction requires the presence of KRIT1. Interacts (via the C-terminal half) with ATF4 (via its DNA binding domain); the interaction occurs in osteoblasts, regulates glucose homeostasis via suppression of beta-cell proliferation and subsequent decrease in insulin production. Interacts with PRMT1; the interaction methylates FOXO1, prevents PKB/AKT1 phosphorylation and retains FOXO1 in the nucleus. Interacts with EP300 and CREBBP; the interactions acetylate FOXO1. Interacts with SIRT2; the interaction is disrupted in response to oxidative stress or serum deprivation, leading to increased level of acetylated FOXO1, which promotes stress-induced autophagy by stimulating E1-like activating enzyme ATG7. Interacts (acetylated form) with ATG7; the interaction is increased in response to oxidative stress or serum deprivation and promotes the autophagic process leading to cell death. Interacts (acetylated form) with PPARG. Interacts with XBP1; this interaction is direct and leads to FOXO1 ubiquitination and degradation via the proteasome pathway. Interacts (via the Fork-head domain) with CEBPA; the interaction increases when FOXO1 is deacetylated. Interacts with WDFY2. Forms a complex with WDFY2 and AKT1. Interacts with CRY1. Interacts with PPIA/CYPA; the interaction promotes FOXO1 dephosphorylation, nuclear accumulation and transcriptional activity. Interacts with TOX4; FOXO1 is required for full induction of TOX4-dependent activity and the interaction is inhibited by insulin. Interacts (when phosphorylated on Ser-263) with STUB1/CHIP. Post-translationally, phosphorylation by NLK promotes nuclear export and inhibits the transcriptional activity. In response to growth factors, phosphorylation on Thr-24, Ser-263 and Ser-326 by PKB/AKT1 promotes nuclear export and inactivation of transactivational activity. Phosphorylation on Thr-24 is required for binding 14-3-3 proteins. Phosphorylation of Ser-263 decreases DNA-binding activity and promotes the phosphorylation of Thr-24 and Ser-326, permitting phosphorylation of Ser-329 and Ser-332, probably by CDK1, leading to nuclear exclusion and loss of function. Stress signals, such as response to oxygen or nitric oxide, attenuate the PKB/AKT1-mediated phosphorylation leading to nuclear retention. Phosphorylation of Ser-336 is independent of IGF1 and leads to reduced function. Dephosphorylated on Thr-24 and Ser-263 by PP2A in beta-cells under oxidative stress leading to nuclear retention. Phosphorylation of Ser-256 by CDK1 disrupts binding of 14-3-3 proteins leading to nuclear accumulation and has no effect on DNA binding nor transcriptional activity. Phosphorylation by STK4/MST1 on Ser-219, upon oxidative stress, inhibits binding to 14-3-3 proteins and nuclear export. PPIA/CYPA promotes its dephosphorylation on Ser-263. In terms of processing, ubiquitinated by SKP2. Ubiquitination leads to proteasomal degradation. Ubiquitinated by STUB1/CHIP; when Ser-263 is phosphorylated. Methylation inhibits AKT1-mediated phosphorylation at Ser-263 and is increased by oxidative stress. Post-translationally, acetylated. Acetylation at Lys-269 and Lys-281 are necessary for autophagic cell death induction. Deacetylated by SIRT2 in response to oxidative stress or serum deprivation, thereby negatively regulating FOXO1-mediated autophagic cell death. Once in the nucleus, acetylated by CREBBP/EP300. Acetylation diminishes the interaction with target DNA and attenuates the transcriptional activity. It increases the phosphorylation at Ser-263. Deacetylation by SIRT1 results in reactivation of the transcriptional activity. Oxidative stress by hydrogen peroxide treatment appears to promote deacetylation and uncoupling of insulin-induced phosphorylation. By contrast, resveratrol acts independently of acetylation. Acetylated at Lys-430, promoting its localization to the nucleus and transcription factor activity. Deacetylation at Lys-430 by SIRT6, promotes its translocation into the cytoplasm, preventing its transcription factor activity. Deacetylation and subsequent inhibition by SIRT6 has different effects depending on cell types: it inhibits gluconeogenesis in hepatocytes, promotes glucose sensing in pancreatic beta-cells and regulates lipid catabolism in brown adipocytes. As to expression, highly in subcutaneous adipose and visceral adipose tissues. Levels higher in piglets than in adults. Also expressed at lower levels in liver and muscle.

The protein localises to the cytoplasm. Its subcellular location is the nucleus. Transcription factor that is the main target of insulin signaling and regulates metabolic homeostasis in response to oxidative stress. Binds to the insulin response element (IRE) with consensus sequence 5'-TT[G/A]TTTTG-3' and the related Daf-16 family binding element (DBE) with consensus sequence 5'-TT[G/A]TTTAC-3'. Activity suppressed by insulin. Main regulator of redox balance and osteoblast numbers and controls bone mass. Orchestrates the endocrine function of the skeleton in regulating glucose metabolism. Also acts as a key regulator of chondrogenic commitment of skeletal progenitor cells in response to lipid availability: when lipids levels are low, translocates to the nucleus and promotes expression of SOX9, which induces chondrogenic commitment and suppresses fatty acid oxidation. Acts synergistically with ATF4 to suppress osteocalcin/BGLAP activity, increasing glucose levels and triggering glucose intolerance and insulin insensitivity. Also suppresses the transcriptional activity of RUNX2, an upstream activator of osteocalcin/BGLAP. Acts as an inhibitor of glucose sensing in pancreatic beta cells by acting as a transcription repressor and suppressing expression of PDX1. In hepatocytes, promotes gluconeogenesis by acting together with PPARGC1A and CEBPA to activate the expression of genes such as IGFBP1, G6PC1 and PCK1. Also promotes gluconeogenesis by directly promoting expression of PPARGC1A and G6PC1. Important regulator of cell death acting downstream of CDK1, PKB/AKT1 and STK4/MST1. Promotes neural cell death. Mediates insulin action on adipose tissue. Regulates the expression of adipogenic genes such as PPARG during preadipocyte differentiation and, adipocyte size and adipose tissue-specific gene expression in response to excessive calorie intake. Regulates the transcriptional activity of GADD45A and repair of nitric oxide-damaged DNA in beta-cells. Required for the autophagic cell death induction in response to starvation or oxidative stress in a transcription-independent manner. Mediates the function of MLIP in cardiomyocytes hypertrophy and cardiac remodeling. Positive regulator of apoptosis in cardiac smooth muscle cells as a result of its transcriptional activation of pro-apoptotic genes. Regulates endothelial cell (EC) viability and apoptosis in a PPIA/CYPA-dependent manner via transcription of CCL2 and BCL2L11 which are involved in EC chemotaxis and apoptosis. The protein is Forkhead box protein O1 (FOXO1) of Sus scrofa (Pig).